Here is a 202-residue protein sequence, read N- to C-terminus: Thymidylate kinase (202 aa).

Residue 13-20 (GTDGAGKS) participates in ATP binding.

The protein belongs to the thymidylate kinase family.

It carries out the reaction dTMP + ATP = dTDP + ADP. In terms of biological role, phosphorylation of dTMP to form dTDP in both de novo and salvage pathways of dTTP synthesis. The polypeptide is Thymidylate kinase (Desulfotalea psychrophila (strain LSv54 / DSM 12343)).